A 533-amino-acid polypeptide reads, in one-letter code: Glucans biosynthesis protein D (533 aa).

A signal peptide (tat-type signal) is located at residues methionine 1–alanine 28.

Belongs to the OpgD/OpgG family. Post-translationally, predicted to be exported by the Tat system. The position of the signal peptide cleavage has not been experimentally proven.

It localises to the periplasm. It functions in the pathway glycan metabolism; osmoregulated periplasmic glucan (OPG) biosynthesis. Probably involved in the control of the structural glucose backbone of osmoregulated periplasmic glucans (OPGs). The polypeptide is Glucans biosynthesis protein D (Xanthomonas campestris pv. campestris (strain 8004)).